A 401-amino-acid polypeptide reads, in one-letter code: 4-hydroxy-3-methylbut-2-enyl diphosphate reductase (401 aa).

Cys66 serves as a coordination point for [4Fe-4S] cluster. Residue His96 participates in (2E)-4-hydroxy-3-methylbut-2-enyl diphosphate binding. His96 serves as a coordination point for dimethylallyl diphosphate. Residue His96 participates in isopentenyl diphosphate binding. A [4Fe-4S] cluster-binding site is contributed by Cys157. His185 contributes to the (2E)-4-hydroxy-3-methylbut-2-enyl diphosphate binding site. Residue His185 coordinates dimethylallyl diphosphate. His185 is an isopentenyl diphosphate binding site. Glu187 serves as the catalytic Proton donor. Residue Thr250 participates in (2E)-4-hydroxy-3-methylbut-2-enyl diphosphate binding. Cys288 is a binding site for [4Fe-4S] cluster. (2E)-4-hydroxy-3-methylbut-2-enyl diphosphate contacts are provided by Ser317, Ser318, Asn319, and Ser379. Residues Ser317, Ser318, Asn319, and Ser379 each coordinate dimethylallyl diphosphate. Positions 317, 318, 319, and 379 each coordinate isopentenyl diphosphate.

It belongs to the IspH family. [4Fe-4S] cluster serves as cofactor.

It catalyses the reaction isopentenyl diphosphate + 2 oxidized [2Fe-2S]-[ferredoxin] + H2O = (2E)-4-hydroxy-3-methylbut-2-enyl diphosphate + 2 reduced [2Fe-2S]-[ferredoxin] + 2 H(+). It carries out the reaction dimethylallyl diphosphate + 2 oxidized [2Fe-2S]-[ferredoxin] + H2O = (2E)-4-hydroxy-3-methylbut-2-enyl diphosphate + 2 reduced [2Fe-2S]-[ferredoxin] + 2 H(+). It functions in the pathway isoprenoid biosynthesis; dimethylallyl diphosphate biosynthesis; dimethylallyl diphosphate from (2E)-4-hydroxy-3-methylbutenyl diphosphate: step 1/1. Its pathway is isoprenoid biosynthesis; isopentenyl diphosphate biosynthesis via DXP pathway; isopentenyl diphosphate from 1-deoxy-D-xylulose 5-phosphate: step 6/6. In terms of biological role, catalyzes the conversion of 1-hydroxy-2-methyl-2-(E)-butenyl 4-diphosphate (HMBPP) into a mixture of isopentenyl diphosphate (IPP) and dimethylallyl diphosphate (DMAPP). Acts in the terminal step of the DOXP/MEP pathway for isoprenoid precursor biosynthesis. This Trichodesmium erythraeum (strain IMS101) protein is 4-hydroxy-3-methylbut-2-enyl diphosphate reductase.